Here is an 84-residue protein sequence, read N- to C-terminus: Cell division topological specificity factor (84 aa).

Belongs to the MinE family.

Prevents the cell division inhibition by proteins MinC and MinD at internal division sites while permitting inhibition at polar sites. This ensures cell division at the proper site by restricting the formation of a division septum at the midpoint of the long axis of the cell. The polypeptide is Cell division topological specificity factor (Hydrogenovibrio crunogenus (strain DSM 25203 / XCL-2) (Thiomicrospira crunogena)).